A 179-amino-acid chain; its full sequence is Translation initiation factor IF-3 (179 aa).

It belongs to the IF-3 family. As to quaternary structure, monomer.

It localises to the cytoplasm. Functionally, IF-3 binds to the 30S ribosomal subunit and shifts the equilibrium between 70S ribosomes and their 50S and 30S subunits in favor of the free subunits, thus enhancing the availability of 30S subunits on which protein synthesis initiation begins. This is Translation initiation factor IF-3 from Buchnera aphidicola subsp. Schizaphis graminum (strain Sg).